We begin with the raw amino-acid sequence, 134 residues long: Large ribosomal subunit protein uL18 (134 aa).

A disordered region spans residues 1 to 25; the sequence is MSNTAQNEKRLPVGKDISTRRRTAR. Residues 7-19 show a composition bias toward basic and acidic residues; it reads NEKRLPVGKDIST.

The protein belongs to the universal ribosomal protein uL18 family. In terms of assembly, part of the 50S ribosomal subunit; part of the 5S rRNA/L5/L18/L25 subcomplex. Contacts the 5S and 23S rRNAs.

This is one of the proteins that bind and probably mediate the attachment of the 5S RNA into the large ribosomal subunit, where it forms part of the central protuberance. The protein is Large ribosomal subunit protein uL18 of Corynebacterium jeikeium (strain K411).